The primary structure comprises 432 residues: Adenylosuccinate synthetase (432 aa).

GTP is bound by residues 12–18 (GDEGKGK) and 40–42 (GHT). The active-site Proton acceptor is the Asp-13. Mg(2+)-binding residues include Asp-13 and Gly-40. IMP contacts are provided by residues 13-16 (DEGK), 38-41 (NAGH), Thr-128, Arg-142, Gln-223, Thr-238, and Arg-302. His-41 functions as the Proton donor in the catalytic mechanism. 298-304 (TVTGRPR) is a binding site for substrate. GTP contacts are provided by residues Arg-304, 330 to 332 (LLD), and 412 to 414 (SVG).

This sequence belongs to the adenylosuccinate synthetase family. Homodimer. Mg(2+) is required as a cofactor.

It is found in the cytoplasm. It carries out the reaction IMP + L-aspartate + GTP = N(6)-(1,2-dicarboxyethyl)-AMP + GDP + phosphate + 2 H(+). It participates in purine metabolism; AMP biosynthesis via de novo pathway; AMP from IMP: step 1/2. Its function is as follows. Plays an important role in the de novo pathway of purine nucleotide biosynthesis. Catalyzes the first committed step in the biosynthesis of AMP from IMP. This is Adenylosuccinate synthetase from Limosilactobacillus reuteri (strain DSM 20016) (Lactobacillus reuteri).